The following is a 782-amino-acid chain: Protein NEDD1 (782 aa).

WD repeat units lie at residues 1-34 (MMSN…GDPC), 41-80 (SPGC…LGTV), 90-130 (SAEE…CIKK), 133-172 (GHTS…RATE), 176-216 (PNGQ…PKMS), 220-260 (QHSA…SSSC), 262-301 (AYEA…QPVT), and 307-358 (SNSE…TPSA). Disordered stretches follow at residues 350–393 (PLPS…WPSG) and 467–512 (PIFD…EAWG). 3 stretches are compositionally biased toward polar residues: residues 352–362 (PSTTPSASQSA), 370–386 (VSAS…TPNR), and 488–498 (SFGSITPTASS). Residues 753–782 (VLSSILENQAEQMKELKLLRKENQELRQRL) adopt a coiled-coil conformation.

As to expression, expressed in root meristematic cells.

It localises to the nucleus envelope. The protein resides in the chromosome. It is found in the centromere. The protein localises to the kinetochore. Its subcellular location is the cytoplasm. It localises to the cytoskeleton. The protein resides in the phragmoplast. It is found in the microtubule organizing center. In terms of biological role, regulates microtubules organization in a centrosome-independent manner. Required for the spindle to be positioned correctly and for the function of gamma-tubulin in organizing phragmoplast microtubules. Component of active gamma-tubulin ring complexes (gamma-TuRCs) associated with cortical microtubules in interphase cells. Mediates gamma-TuRC recruitment to the nucleation sites and is important for determining the ratio of branched to parallel nucleation. May mediate the localization of GCP2 and GCP3 to the nuclear envelope. This Arabidopsis thaliana (Mouse-ear cress) protein is Protein NEDD1.